A 522-amino-acid chain; its full sequence is Monogalactosyldiacylglycerol synthase, chloroplastic (522 aa).

Residues 1–98 (MSHPSTVTSE…RIPLGFSSIG (98 aa)) constitute a chloroplast transit peptide.

This sequence belongs to the glycosyltransferase 28 family. In terms of assembly, homodimer. Requires Zn(2+) as cofactor.

The protein localises to the plastid. It is found in the chloroplast inner membrane. It carries out the reaction a 1,2-diacyl-sn-glycerol + UDP-alpha-D-galactose = a 1,2-diacyl-3-O-(beta-D-galactosyl)-sn-glycerol + UDP + H(+). With respect to regulation, inhibited by ortho-phenanthroline and UDP (competitive inhibitor relatively to UDP-Gal only) and inactivated by citraconic anhydride, tert-butoxycarbonyl-L-methionine hydrosuccinimidyl ester (SLR) and N-ethylmaleimide (NEM). In terms of biological role, involved in the synthesis of the major structural component of photosynthetic membranes. The 1,2-diacylglycerol substrate preference is 18:2/18:2 &gt; 18:0/18:1 &gt; 18:1/18:1 &gt; 18:1/16:0 &gt; 16:0/18:2 &gt; 18:3/18:3 &gt; 16:0/18:1 &gt; 16:0/16:0 &gt; 18:0/18:0. The polypeptide is Monogalactosyldiacylglycerol synthase, chloroplastic (MGD A) (Spinacia oleracea (Spinach)).